The primary structure comprises 129 residues: Large ribosomal subunit protein uL14m (129 aa).

It belongs to the universal ribosomal protein uL14 family. In terms of assembly, component of the mitochondrial ribosome large subunit (39S) which comprises a 16S rRNA and about 50 distinct proteins.

The protein resides in the mitochondrion. The protein is Large ribosomal subunit protein uL14m (mrpl14) of Dictyostelium discoideum (Social amoeba).